Consider the following 364-residue polypeptide: Growth hormone secretagogue receptor type 1 (364 aa).

Residues 1–40 (MWNATPSEEPEPNVTLDLDWDASPGNDSLSDELLPLFPAP) are Extracellular-facing. N-linked (GlcNAc...) asparagine glycosylation is found at N13 and N26. A helical transmembrane segment spans residues 41-66 (LLAGVTATCVALFVVGISGNLLTMLV). The Cytoplasmic portion of the chain corresponds to 67-72 (VSRFRE). The helical transmembrane segment at 73–96 (LRTTTNLYLSSMAFSDLLIFLCMP) threads the bilayer. Over 97-117 (LDLVRLWQYRPWNFGDLLCKL) the chain is Extracellular. C115 and C197 are oxidised to a cystine. Residues 118–139 (FQFVSESCTYATVLTITALSVE) form a helical membrane-spanning segment. Residues 140–162 (RYFAICFPLRAKVVVTKGRVKLV) lie on the Cytoplasmic side of the membrane. The chain crosses the membrane as a helical span at residues 163 to 183 (ILVIWAVAFCSAGPIFVLVGV). Over 184 to 211 (EHENGTDPRDTNECRATEFAVRSGLLTV) the chain is Extracellular. N-linked (GlcNAc...) asparagine glycosylation occurs at N187. A helical membrane pass occupies residues 212–235 (MVWVSSVFFFLPVFCLTVLYSLIG). The Cytoplasmic portion of the chain corresponds to 236–263 (RKLWRRRGDAAVGSSLRDQNHKQTVKML). A helical transmembrane segment spans residues 264-285 (AVVVFAFILCWLPFHVGRYLFS). The Extracellular portion of the chain corresponds to 286–302 (KSFEPGSLEIAQISQYC). A helical transmembrane segment spans residues 303-326 (NLVSFVLFYLSAAINPILYNIMSK). At 327–364 (KYRVAVFKLLGFESFSQRKLSTLKDESSRAWTKSSINT) the chain is on the cytoplasmic side.

Belongs to the G-protein coupled receptor 1 family.

The protein resides in the cell membrane. Its function is as follows. Receptor for ghrelin, coupled to G-alpha-11 proteins. Stimulates growth hormone secretion. Also binds other growth hormone releasing peptides (GHRP) (e.g. Met-enkephalin and GHRP-6) as well as non-peptide, low molecular weight secretagogues (e.g. L-692,429, MK-0677, adenosine). This chain is Growth hormone secretagogue receptor type 1 (Ghsr), found in Mus musculus (Mouse).